The chain runs to 138 residues: Large ribosomal subunit protein uL16 (138 aa).

The disordered stretch occupies residues 1–29; sequence MSLLQPRKVKWRKPQKGRTKGKATRRNQV. The span at 7–25 shows a compositional bias: basic residues; it reads RKVKWRKPQKGRTKGKATR.

This sequence belongs to the universal ribosomal protein uL16 family. Part of the 50S ribosomal subunit.

Its function is as follows. Binds 23S rRNA and is also seen to make contacts with the A and possibly P site tRNAs. The polypeptide is Large ribosomal subunit protein uL16 (Sulfurihydrogenibium sp. (strain YO3AOP1)).